We begin with the raw amino-acid sequence, 91 residues long: Small ribosomal subunit protein bS20 (91 aa).

It belongs to the bacterial ribosomal protein bS20 family.

In terms of biological role, binds directly to 16S ribosomal RNA. The chain is Small ribosomal subunit protein bS20 from Caulobacter vibrioides (strain ATCC 19089 / CIP 103742 / CB 15) (Caulobacter crescentus).